The following is a 1086-amino-acid chain: NAD(P) transhydrogenase, mitochondrial (1086 aa).

The N-terminal 43 residues, 1–43, are a transit peptide targeting the mitochondrion; that stretch reads MANLLKTVVTGCSCPLLSNLGSCKGLRVKKDFLRTFYTHQELW. Topologically, residues 44-474 are mitochondrial matrix; the sequence is CKAPVKPGIP…TITPFRKTMS (431 aa). Position 70 is an N6-acetyllysine (Lys70). Lys117 is modified (N6-succinyllysine). 182-184 is a binding site for NAD(+); that stretch reads RVT. Position 224 is an N6-succinyllysine (Lys224). Residues Val237, 257 to 259, and Gly287 contribute to the NAD(+) site; that span reads DTR. Lys294 carries the post-translational modification N6-succinyllysine. NAD(+) contacts are provided by Glu300 and Leu319. Lys331 carries the post-translational modification N6-succinyllysine. N6-acetyllysine is present on Lys397. 4 helical membrane passes run 475–493, 501–521, 527–546, and 558–578; these read TASA…GIAA, MVTT…GVTP, LMSV…LALM, and GLAA…FLVT. The Mitochondrial matrix segment spans residues 579 to 595; that stretch reads QRMLDMFKRPTDPPEYN. 5 consecutive transmembrane segments (helical) span residues 596-616, 622-642, 646-666, 672-691, and 702-722; these read YLYL…LYSG, IMYL…STQG, LGNA…LGVL, LLAQ…LTIA, and LVAA…IAEY. Residues 723-739 are Cytoplasmic-facing; the sequence is IIEYPHFATDAAANLTK. 5 helical membrane-spanning segments follow: residues 740 to 760, 778 to 797, 801 to 819, 833 to 853, and 857 to 879; these read IVAY…LIAY, HLLN…PFMV, FTTG…AVMG, VVIT…GFLL, and LLTI…MCVA. At 880 to 1086 the chain is on the mitochondrial matrix side; it reads MNRSLANVIL…QAKVRESYQK (207 aa). Residues Tyr933, 965–970, 1007–1011, 1026–1027, 1042–1049, and 1068–1069 contribute to the NADP(+) site; these read VAGRMP, GANDT, GM, KRSLGVGY, and DA. Position 1079 is an N6-succinyllysine (Lys1079).

It in the N-terminal section; belongs to the AlaDH/PNT family. The protein in the C-terminal section; belongs to the PNT beta subunit family. As to quaternary structure, homodimer. In terms of tissue distribution, widely expressed with expression most readily detectable in adrenal, heart, kidney, thyroid and adipose tissues.

Its subcellular location is the mitochondrion inner membrane. The enzyme catalyses NAD(+) + NADPH + H(+)(in) = NADH + NADP(+) + H(+)(out). Functionally, the transhydrogenation between NADH and NADP is coupled to respiration and ATP hydrolysis and functions as a proton pump across the membrane. May play a role in reactive oxygen species (ROS) detoxification in the adrenal gland. This chain is NAD(P) transhydrogenase, mitochondrial (NNT), found in Homo sapiens (Human).